A 300-amino-acid polypeptide reads, in one-letter code: RNA polymerase sigma factor RpoH (300 aa).

The sigma-70 factor domain-2 stretch occupies residues 53–122 (LVTSHLRLVA…IQEYILRSWS (70 aa)). The Interaction with polymerase core subunit RpoC signature appears at 77–80 (EVVS). The interval 231 to 282 (AMGVLNDRERRIFEARRLAEDPVTLEELSSEFDISRERVRQIEVRAFEKVQE) is sigma-70 factor domain-4. The segment at residues 255-274 (LEELSSEFDISRERVRQIEV) is a DNA-binding region (H-T-H motif).

Belongs to the sigma-70 factor family. RpoH subfamily. Interacts with the RNA polymerase core enzyme.

The protein resides in the cytoplasm. Functionally, sigma factors are initiation factors that promote the attachment of RNA polymerase to specific initiation sites and are then released. This sigma factor is involved in regulation of expression of heat shock genes. The protein is RNA polymerase sigma factor RpoH of Rhizobium radiobacter (Agrobacterium tumefaciens).